We begin with the raw amino-acid sequence, 418 residues long: Sialidase-3 (418 aa).

Residues tyrosine 24–proline 27 carry the FRIP motif motif. Residues arginine 25 and arginine 45 each coordinate substrate. Aspartate 50 serves as the catalytic Proton acceptor. The BNR 1 repeat unit spans residues leucine 129–glutamate 140. Tyrosine 179 and tyrosine 181 together coordinate substrate. One copy of the BNR 2 repeat lies at serine 203–lysine 214. Positions 223 and 243 each coordinate substrate. Residues serine 254–threonine 265 form a BNR 3 repeat. Serine 312 is subject to Phosphoserine. A substrate-binding site is contributed by arginine 339. Tyrosine 369 acts as the Nucleophile in catalysis. The active site involves glutamate 386.

Belongs to the glycosyl hydrolase 33 family. Interacts with CAV1; this interaction enhances NEU3 sialidase activity within caveola. Interacts with EGFR; this interaction mediates desialylation of EGFR and enhances downstream signaling. Post-translationally, palmitoylated; may regulate intracellular trafficking and anchorage to plasma membrane and endomembranes. Expressed in heart, brain and cerebral cortex.

Its subcellular location is the cell membrane. It localises to the membrane. The protein localises to the caveola. It is found in the early endosome membrane. The protein resides in the recycling endosome membrane. Its subcellular location is the lysosome membrane. It carries out the reaction Hydrolysis of alpha-(2-&gt;3)-, alpha-(2-&gt;6)-, alpha-(2-&gt;8)- glycosidic linkages of terminal sialic acid residues in oligosaccharides, glycoproteins, glycolipids, colominic acid and synthetic substrates.. It catalyses the reaction a ganglioside GD1a + H2O = a ganglioside GM1 + N-acetylneuraminate. The enzyme catalyses a ganglioside GD1a (d18:1(4E)) + H2O = a ganglioside GM1 (d18:1(4E)) + N-acetylneuraminate. The catalysed reaction is a ganglioside GD1b + H2O = a ganglioside GM1 + N-acetylneuraminate. It carries out the reaction a ganglioside GD1b (d18:1(4E)) + H2O = a ganglioside GM1 (d18:1(4E)) + N-acetylneuraminate. It catalyses the reaction a ganglioside GD3 + H2O = a ganglioside GM3 + N-acetylneuraminate. The enzyme catalyses a ganglioside GD3 (d18:1(4E)) + H2O = a ganglioside GM3 (d18:1(4E)) + N-acetylneuraminate. The catalysed reaction is a ganglioside GM3 + H2O = a beta-D-galactosyl-(1-&gt;4)-beta-D-glucosyl-(1&lt;-&gt;1)-ceramide + N-acetylneuraminate. It carries out the reaction a ganglioside GM1 + H2O = a ganglioside GA1 + N-acetylneuraminate. It catalyses the reaction a ganglioside GM1 (d18:1(4E)) + H2O = a ganglioside GA1 (d18:1(4E)) + N-acetylneuraminate. The enzyme catalyses a ganglioside GM2 (d18:1(4E)) + H2O = a ganglioside GA2 (d18:1(4E)) + N-acetylneuraminate. The catalysed reaction is a ganglioside GM3 (d18:1(4E)) + H2O = a beta-D-Gal-(1-&gt;4)-beta-D-Glc-(1&lt;-&gt;1)-Cer(d18:1(4E)) + N-acetylneuraminate. It carries out the reaction a ganglioside GT1b + H2O = a ganglioside GD1b + N-acetylneuraminate. Exo-alpha-sialidase that catalyzes the hydrolytic cleavage of the terminal sialic acid (N-acetylneuraminic acid, Neu5Ac) of a glycan moiety in the catabolism of glycolipids, glycoproteins and oligosacharides. Displays high catalytic efficiency for gangliosides including alpha-(2-&gt;3)-sialylated GD1a and GM3 and alpha-(2-&gt;8)-sialylated GD3. Plays a role in the regulation of transmembrane signaling through the modulation of ganglioside content of the lipid bilayer and by direct interaction with signaling receptors, such as EGFR. Desialylates EGFR and activates downstream signaling in proliferating cells. Contributes to clathrin-mediated endocytosis by regulating sorting of endocytosed receptors to early and recycling endosomes. The chain is Sialidase-3 (Neu3) from Mus musculus (Mouse).